The following is a 430-amino-acid chain: MIDLKQLRENPQAFGDRLRRRGGDFDLDRILELDAQQRQLEQQRSQLQARSNEIGALVGKKIKSGIAPTDPEIQALKAEANALKQKLSDLEPQERQLKEELESLLLTIPNPPSETTPIGRDETDNVEVRRWGEEYKPTYPCQPHWDIGTRLGLWDVERSVKVAQSRFVTLLGLGAALERALIQFMLDSHRERGYVEVLPPLLVNTASLTGTGQLPKFAEESFRCADDDLWLIPTAEVPVTNLYRDEILAADQLPIYHCAYTPCFRREAGSYGKDTRGLIRLHQFNKVELVKFVHPETSAAEHEALVADAEFILQALKLPYRVIELCTGDLGFAAMKCYDLEVWLPAAGCYREISSCSNFGDFQARRAKIRFKGAKHKGTQFVHTLNGSGLAVGRTMAAILENYQQPDGTVRVPEVLQPYLKCSHIGGAKS.

234 to 236 (TAE) contributes to the L-serine binding site. An ATP-binding site is contributed by 265 to 267 (RRE). Position 288 (glutamate 288) interacts with L-serine. 352 to 355 (EISS) serves as a coordination point for ATP. Serine 388 is a binding site for L-serine.

Belongs to the class-II aminoacyl-tRNA synthetase family. Type-1 seryl-tRNA synthetase subfamily. Homodimer. The tRNA molecule binds across the dimer.

It is found in the cytoplasm. It carries out the reaction tRNA(Ser) + L-serine + ATP = L-seryl-tRNA(Ser) + AMP + diphosphate + H(+). It catalyses the reaction tRNA(Sec) + L-serine + ATP = L-seryl-tRNA(Sec) + AMP + diphosphate + H(+). It participates in aminoacyl-tRNA biosynthesis; selenocysteinyl-tRNA(Sec) biosynthesis; L-seryl-tRNA(Sec) from L-serine and tRNA(Sec): step 1/1. Its function is as follows. Catalyzes the attachment of serine to tRNA(Ser). Is also able to aminoacylate tRNA(Sec) with serine, to form the misacylated tRNA L-seryl-tRNA(Sec), which will be further converted into selenocysteinyl-tRNA(Sec). The chain is Serine--tRNA ligase from Thermosynechococcus vestitus (strain NIES-2133 / IAM M-273 / BP-1).